Reading from the N-terminus, the 612-residue chain is MRDIRELLLVLFTSCLALGSVPSSFDGDRYCRCQPGEACWPSLADWQALNMSIQGTLVEVRPIGHVCHEPTYNKADCERVSKLSSNGTWRASQPGAQQEHAWEVSLSRNESCYVGPANPAEPCGQGRIPRYSAMVETTEQAQKAIRFARERRLRLVIKNTGHDSGGRSSAVDSFQILTQRLKDISFIEEFTPTLAETRGPSVRIGAGVLTKELYAVADEHGYTAMGGECATVGVAGGYIQGGGVSTALTPMMGLAADLVQEFEVISAEGSLVIANEFQNQDLFWALRGGGGGTVGLVTSITMPVFGAIPANISELSFESQQPDEAFWTAVKEMIYVTRDITTGGNSGQYWVGRGPTGSYFVRQTLFFLGETDIEPADKMGSLLRVLQDQEIAFRFNVTAYPRLSSFLAIPQGEFVGGIAFHQENILIPQGFYDSPEGPAQLVDRLAEVKLNPGDMWVANTLGGQVMANKDVDNAMHSGWRTASVLLVGNRIFEPALKSQLDVQERLTAVEGPLLHSIGQPAPEAIYLNEADADLENWQDWFWGEKYARLRDIKSKWDPDDLFLVRHGVGSEDWDEDGMCRMQLSPQECPVREHSRCTCKFFECAMLHVPGLL.

The N-terminal stretch at methionine 1–glycine 19 is a signal peptide. N-linked (GlcNAc...) asparagine glycans are attached at residues asparagine 50, asparagine 86, and asparagine 109. Residues glycine 124–alanine 307 enclose the FAD-binding PCMH-type domain. N-linked (GlcNAc...) asparagine glycosylation is found at asparagine 311 and asparagine 396.

This sequence belongs to the oxygen-dependent FAD-linked oxidoreductase family. FAD is required as a cofactor.

The protein operates within alkaloid biosynthesis. Functionally, FAD-linked oxidoreductase; part of the gene cluster that mediates the biosynthesis of notoamide, a fungal indole alkaloid that belongs to a family of natural products containing a characteristic bicyclo[2.2.2]diazaoctane core. The first step of notoamide biosynthesis involves coupling of L-proline and L-tryptophan by the bimodular NRPS notE', to produce cyclo-L-tryptophan-L-proline called brevianamide F. The reverse prenyltransferase notF' then acts as a deoxybrevianamide E synthase and converts brevianamide F to deoxybrevianamide E via reverse prenylation at C-2 of the indole ring leading to the bicyclo[2.2.2]diazaoctane core. Deoxybrevianamide E is further hydroxylated at C-6 of the indole ring, likely catalyzed by the cytochrome P450 monooxygenase notG', to yield 6-hydroxy-deoxybrevianamide E. 6-hydroxy-deoxybrevianamide E is a specific substrate of the prenyltransferase notC' for normal prenylation at C-7 to produce 6-hydroxy-7-prenyl-deoxybrevianamide, also called notoamide S. As the proposed pivotal branching point in notoamide biosynthesis, notoamide S can be diverted to notoamide E through an oxidative pyran ring closure putatively catalyzed by either notH' cytochrome P450 monooxygenase or the notD' FAD-linked oxidoreductase. This step would be followed by an indole 2,3-epoxidation-initiated pinacol-like rearrangement catalyzed by the notB' FAD-dependent monooxygenase leading to the formation of notoamide C and notoamide D. On the other hand notoamide S is converted to notoamide T by notH' (or notD'), a bifunctional oxidase that also functions as the intramolecular Diels-Alderase responsible for generation of (-)-notoamide T. To generate antipodal (+)-notoaminide T, notH (or notD) in Aspergillus strain MF297-2 is expected to catalyze a Diels-Alder reaction leading to the opposite stereochemistry. The remaining oxidoreductase notD' (or notH') likely catalyzes the oxidative pyran ring formation to yield (-)-stephacidin A. The FAD-dependent monooxygenase notI' is highly similar to notB' and is predicted to catalyze a similar conversion from (-)-stephacidin A to (+)-notoamide B via the 2,3-epoxidation of (-)-stephacidin A followed by a pinacol-type rearrangement. Finally, it remains unclear which enzyme could be responsible for the final hydroxylation steps leading to notoamide A and sclerotiamide. The sequence is that of FAD-linked oxidoreductase notD' from Aspergillus versicolor.